The primary structure comprises 955 residues: Structure-specific endonuclease subunit SLX4 (955 aa).

7 disordered regions span residues 75 to 173 (QAEQ…RTTS), 189 to 231 (PVTT…TVSR), 352 to 376 (GPSN…KKPR), 539 to 608 (EMQK…PTKI), 621 to 648 (PIVA…PPPR), 705 to 784 (AAGQ…ASPD), and 819 to 846 (LDSD…EKDS). Over residues 123-137 (RKARKTANGVTKKKR) the composition is skewed to basic residues. Over residues 150–159 (NEITTPTKNQ) the composition is skewed to polar residues. Low complexity predominate over residues 189-198 (PVTTSTTDLT). The segment covering 209–225 (TKSRVRKTSSAASRKKK) has biased composition (basic residues). Over residues 352 to 362 (GPSNDSKIPNQ) the composition is skewed to polar residues. Residues 539-551 (EMQKSPSRSEPKG) show a composition bias toward basic and acidic residues. Residues 579 to 601 (SANSAEHTLKTQASKSTHFASTT) are compositionally biased toward polar residues. Low complexity-rich tracts occupy residues 705–720 (AAGQ…RTSA) and 727–737 (KTSTAAAAAKS). Basic residues-rich tracts occupy residues 738–748 (PTKRPVGRPRK) and 767–776 (KRPRGRPKKN). Low complexity predominate over residues 828–841 (SPSPSLSPEPVFSS).

The protein belongs to the SLX4 family. Forms a heterodimer with SLX1. In terms of processing, phosphorylated in response to DNA damage.

It localises to the nucleus. In terms of biological role, regulatory subunit of the SLX1-SLX4 structure-specific endonuclease that resolves DNA secondary structures generated during DNA repair and recombination. Has endonuclease activity towards branched DNA substrates, introducing single-strand cuts in duplex DNA close to junctions with ss-DNA. In Pyricularia oryzae (strain 70-15 / ATCC MYA-4617 / FGSC 8958) (Rice blast fungus), this protein is Structure-specific endonuclease subunit SLX4.